A 472-amino-acid chain; its full sequence is Uronate isomerase (472 aa).

Belongs to the metallo-dependent hydrolases superfamily. Uronate isomerase family.

The catalysed reaction is D-glucuronate = D-fructuronate. It carries out the reaction aldehydo-D-galacturonate = keto-D-tagaturonate. It functions in the pathway carbohydrate metabolism; pentose and glucuronate interconversion. The chain is Uronate isomerase from Oceanobacillus iheyensis (strain DSM 14371 / CIP 107618 / JCM 11309 / KCTC 3954 / HTE831).